The following is a 50-amino-acid chain: Penaeidin-1 (50 aa).

Intrachain disulfides connect cysteine 25–cysteine 38, cysteine 27–cysteine 45, and cysteine 39–cysteine 46.

Higher expression in hemocytes and to a lesser extent in heart, testis, gills, intestine, lymphoid organ and hepatopancreas. Traces in eyes and subcuticular epithelium. Not present in the brain.

The protein resides in the cytoplasmic granule. Antibacterial activity against M.luteus and E.coli bacteria. Antifungal activity against N.crassa and F.oxysporum. Presents chitin-binding activity. The protein is Penaeidin-1 of Penaeus vannamei (Whiteleg shrimp).